The following is a 774-amino-acid chain: Protein translocase subunit SecA (774 aa).

ATP is bound by residues Gln66, 84-88, and Asp474; that span reads GEGKS.

It belongs to the SecA family.

The protein resides in the plastid. It localises to the chloroplast stroma. The protein localises to the chloroplast thylakoid membrane. The catalysed reaction is ATP + H2O + cellular proteinSide 1 = ADP + phosphate + cellular proteinSide 2.. In terms of biological role, has a central role in coupling the hydrolysis of ATP to the transfer of proteins across the thylakoid membrane. The sequence is that of Protein translocase subunit SecA from Cyanidioschyzon merolae (strain NIES-3377 / 10D) (Unicellular red alga).